The chain runs to 184 residues: ATP synthase subunit b, chloroplastic (184 aa).

Residues Leu27–Leu49 traverse the membrane as a helical segment.

It belongs to the ATPase B chain family. F-type ATPases have 2 components, F(1) - the catalytic core - and F(0) - the membrane proton channel. F(1) has five subunits: alpha(3), beta(3), gamma(1), delta(1), epsilon(1). F(0) has four main subunits: a(1), b(1), b'(1) and c(10-14). The alpha and beta chains form an alternating ring which encloses part of the gamma chain. F(1) is attached to F(0) by a central stalk formed by the gamma and epsilon chains, while a peripheral stalk is formed by the delta, b and b' chains.

The protein localises to the plastid. It is found in the chloroplast thylakoid membrane. In terms of biological role, f(1)F(0) ATP synthase produces ATP from ADP in the presence of a proton or sodium gradient. F-type ATPases consist of two structural domains, F(1) containing the extramembraneous catalytic core and F(0) containing the membrane proton channel, linked together by a central stalk and a peripheral stalk. During catalysis, ATP synthesis in the catalytic domain of F(1) is coupled via a rotary mechanism of the central stalk subunits to proton translocation. Component of the F(0) channel, it forms part of the peripheral stalk, linking F(1) to F(0). The polypeptide is ATP synthase subunit b, chloroplastic (Phaseolus vulgaris (Kidney bean)).